The sequence spans 86 residues: Small ribosomal subunit protein bS18 (86 aa).

This sequence belongs to the bacterial ribosomal protein bS18 family. In terms of assembly, part of the 30S ribosomal subunit. Forms a tight heterodimer with protein bS6.

Functionally, binds as a heterodimer with protein bS6 to the central domain of the 16S rRNA, where it helps stabilize the platform of the 30S subunit. This Campylobacter concisus (strain 13826) protein is Small ribosomal subunit protein bS18.